The chain runs to 1328 residues: ABC transporter G family member 2 (1328 aa).

The ABC transporter 1 domain occupies Val53 to Lys299. Gly91–Thr98 contacts ATP. The region spanning Ile388–Val665 is the ABC transmembrane type-2 1 domain. The next 7 membrane-spanning stretches (helical) occupy residues Ile398–Asn418, Leu428–Phe448, Ile477–Leu497, Phe504–Met524, Leu534–Ala554, Ile559–Leu579, and Ile642–Leu662. The segment at Arg670 to Lys691 is disordered. A compositionally biased stretch (basic residues) spans Lys678–Lys689. One can recognise an ABC transporter 2 domain in the interval Val721–Gly960. Gly755 to Ser762 serves as a coordination point for ATP. Residues Val1049–Gln1286 enclose the ABC transmembrane type-2 2 domain. A run of 6 helical transmembrane segments spans residues Leu1059–Met1076, Val1087–Ile1107, Ile1128–Tyr1148, Phe1172–Leu1192, Ile1197–Ile1217, and Ala1303–Ile1323.

It belongs to the ABC transporter superfamily. ABCG family. PDR (TC 3.A.1.205) subfamily.

It localises to the endosome membrane. In terms of biological role, required for endocytosis and endosomal pH regulation. The polypeptide is ABC transporter G family member 2 (abcG2) (Dictyostelium discoideum (Social amoeba)).